The following is a 316-amino-acid chain: Replication initiation protein (316 aa).

This sequence belongs to the initiator RepB protein family.

This is Replication initiation protein (repA) from Escherichia coli.